The following is a 182-amino-acid chain: ATP-dependent protease subunit HslV (182 aa).

T12 is an active-site residue. Residues A167, C170, and T173 each contribute to the Na(+) site.

The protein belongs to the peptidase T1B family. HslV subfamily. A double ring-shaped homohexamer of HslV is capped on each side by a ring-shaped HslU homohexamer. The assembly of the HslU/HslV complex is dependent on binding of ATP.

The protein resides in the cytoplasm. The catalysed reaction is ATP-dependent cleavage of peptide bonds with broad specificity.. With respect to regulation, allosterically activated by HslU binding. Its function is as follows. Protease subunit of a proteasome-like degradation complex believed to be a general protein degrading machinery. The polypeptide is ATP-dependent protease subunit HslV (Prosthecochloris aestuarii (strain DSM 271 / SK 413)).